The chain runs to 49 residues: Large ribosomal subunit protein bL33 (49 aa).

This sequence belongs to the bacterial ribosomal protein bL33 family.

The protein is Large ribosomal subunit protein bL33 of Streptococcus gordonii (strain Challis / ATCC 35105 / BCRC 15272 / CH1 / DL1 / V288).